Here is a 355-residue protein sequence, read N- to C-terminus: UDP-N-acetylglucosamine--N-acetylmuramyl-(pentapeptide) pyrophosphoryl-undecaprenol N-acetylglucosamine transferase (355 aa).

Residues 15–17 (TGG), N127, R163, S191, I244, 263–268 (ALTVSE), and Q288 each bind UDP-N-acetyl-alpha-D-glucosamine.

This sequence belongs to the glycosyltransferase 28 family. MurG subfamily.

It localises to the cell inner membrane. The enzyme catalyses di-trans,octa-cis-undecaprenyl diphospho-N-acetyl-alpha-D-muramoyl-L-alanyl-D-glutamyl-meso-2,6-diaminopimeloyl-D-alanyl-D-alanine + UDP-N-acetyl-alpha-D-glucosamine = di-trans,octa-cis-undecaprenyl diphospho-[N-acetyl-alpha-D-glucosaminyl-(1-&gt;4)]-N-acetyl-alpha-D-muramoyl-L-alanyl-D-glutamyl-meso-2,6-diaminopimeloyl-D-alanyl-D-alanine + UDP + H(+). The protein operates within cell wall biogenesis; peptidoglycan biosynthesis. Its function is as follows. Cell wall formation. Catalyzes the transfer of a GlcNAc subunit on undecaprenyl-pyrophosphoryl-MurNAc-pentapeptide (lipid intermediate I) to form undecaprenyl-pyrophosphoryl-MurNAc-(pentapeptide)GlcNAc (lipid intermediate II). The protein is UDP-N-acetylglucosamine--N-acetylmuramyl-(pentapeptide) pyrophosphoryl-undecaprenol N-acetylglucosamine transferase of Photorhabdus laumondii subsp. laumondii (strain DSM 15139 / CIP 105565 / TT01) (Photorhabdus luminescens subsp. laumondii).